The sequence spans 790 residues: Protein SEY1 (790 aa).

At 1–692 (MELSEGELSH…KRSIVQHITQ (692 aa)) the chain is on the cytoplasmic side. Residues 55 to 284 (GNNYHIISVF…VSNELFKPEY (230 aa)) enclose the GB1/RHD3-type G domain. 65–72 (GSQSTGKS) contacts GTP. The helical transmembrane segment at 693–713 (IPYYIYLIILVLGWNEFMAII) threads the bilayer. Residues 714–716 (RNP) lie on the Lumenal side of the membrane. A helical membrane pass occupies residues 717 to 737 (LFFSLSIVLGATVYVLYYLGL). The Cytoplasmic segment spans residues 738–790 (LRPALVVAQRTMDEVIVMAKTKLREVLIDDHEVTGRQLNKMAGSKENIELDDM).

This sequence belongs to the TRAFAC class dynamin-like GTPase superfamily. GB1/RHD3 GTPase family. RHD3 subfamily.

The protein resides in the endoplasmic reticulum membrane. In terms of biological role, cooperates with the reticulon proteins and tubule-shaping DP1 family proteins to generate and maintain the structure of the tubular endoplasmic reticulum network. Has GTPase activity, which is required for its function in ER organization. This is Protein SEY1 from Candida albicans (strain WO-1) (Yeast).